Here is a 165-residue protein sequence, read N- to C-terminus: Xanthine-guanine phosphoribosyltransferase (165 aa).

5-phospho-alpha-D-ribose 1-diphosphate contacts are provided by residues 41–42 (RG) and 98–106 (DDLTDTGKT). Asp-99 contacts Mg(2+). Positions 102 and 145 each coordinate guanine. Xanthine contacts are provided by Asp-102 and Ile-145. GMP-binding positions include 102 to 106 (DTGKT) and 144 to 145 (WI).

It belongs to the purine/pyrimidine phosphoribosyltransferase family. XGPT subfamily. As to quaternary structure, homotetramer. Requires Mg(2+) as cofactor.

It is found in the cell inner membrane. The catalysed reaction is GMP + diphosphate = guanine + 5-phospho-alpha-D-ribose 1-diphosphate. It carries out the reaction XMP + diphosphate = xanthine + 5-phospho-alpha-D-ribose 1-diphosphate. The enzyme catalyses IMP + diphosphate = hypoxanthine + 5-phospho-alpha-D-ribose 1-diphosphate. It participates in purine metabolism; GMP biosynthesis via salvage pathway; GMP from guanine: step 1/1. The protein operates within purine metabolism; XMP biosynthesis via salvage pathway; XMP from xanthine: step 1/1. Functionally, purine salvage pathway enzyme that catalyzes the transfer of the ribosyl-5-phosphate group from 5-phospho-alpha-D-ribose 1-diphosphate (PRPP) to the N9 position of the 6-oxopurines guanine and xanthine to form the corresponding ribonucleotides GMP (guanosine 5'-monophosphate) and XMP (xanthosine 5'-monophosphate), with the release of PPi. To a lesser extent, also acts on hypoxanthine. This is Xanthine-guanine phosphoribosyltransferase from Rhizobium meliloti (strain 1021) (Ensifer meliloti).